Reading from the N-terminus, the 149-residue chain is SsrA-binding protein (149 aa).

The protein belongs to the SmpB family.

Its subcellular location is the cytoplasm. Required for rescue of stalled ribosomes mediated by trans-translation. Binds to transfer-messenger RNA (tmRNA), required for stable association of tmRNA with ribosomes. tmRNA and SmpB together mimic tRNA shape, replacing the anticodon stem-loop with SmpB. tmRNA is encoded by the ssrA gene; the 2 termini fold to resemble tRNA(Ala) and it encodes a 'tag peptide', a short internal open reading frame. During trans-translation Ala-aminoacylated tmRNA acts like a tRNA, entering the A-site of stalled ribosomes, displacing the stalled mRNA. The ribosome then switches to translate the ORF on the tmRNA; the nascent peptide is terminated with the 'tag peptide' encoded by the tmRNA and targeted for degradation. The ribosome is freed to recommence translation, which seems to be the essential function of trans-translation. The protein is SsrA-binding protein of Wolbachia pipientis wMel.